A 182-amino-acid chain; its full sequence is ATP-dependent protease subunit HslV (182 aa).

Residue Thr7 is part of the active site. Residues Ala166, Cys169, and Thr172 each coordinate Na(+).

The protein belongs to the peptidase T1B family. HslV subfamily. As to quaternary structure, a double ring-shaped homohexamer of HslV is capped on each side by a ring-shaped HslU homohexamer. The assembly of the HslU/HslV complex is dependent on binding of ATP.

It localises to the cytoplasm. It catalyses the reaction ATP-dependent cleavage of peptide bonds with broad specificity.. Allosterically activated by HslU binding. In terms of biological role, protease subunit of a proteasome-like degradation complex believed to be a general protein degrading machinery. This Albidiferax ferrireducens (strain ATCC BAA-621 / DSM 15236 / T118) (Rhodoferax ferrireducens) protein is ATP-dependent protease subunit HslV.